The following is a 94-amino-acid chain: Integration host factor subunit beta (94 aa).

The protein belongs to the bacterial histone-like protein family. Heterodimer of an alpha and a beta chain.

This protein is one of the two subunits of integration host factor, a specific DNA-binding protein that functions in genetic recombination as well as in transcriptional and translational control. In Brucella melitensis biotype 2 (strain ATCC 23457), this protein is Integration host factor subunit beta.